We begin with the raw amino-acid sequence, 207 residues long: Chloramphenicol acetyltransferase (207 aa).

H186 acts as the Proton acceptor in catalysis.

Belongs to the chloramphenicol acetyltransferase family. Homotrimer.

It catalyses the reaction chloramphenicol + acetyl-CoA = chloramphenicol 3-acetate + CoA. Its function is as follows. This enzyme is an effector of chloramphenicol resistance in bacteria. The chain is Chloramphenicol acetyltransferase from Campylobacter coli.